A 444-amino-acid chain; its full sequence is UDP-N-acetylmuramoylalanine--D-glutamate ligase (444 aa).

118-124 (GTNGKTT) contributes to the ATP binding site.

The protein belongs to the MurCDEF family.

It localises to the cytoplasm. It catalyses the reaction UDP-N-acetyl-alpha-D-muramoyl-L-alanine + D-glutamate + ATP = UDP-N-acetyl-alpha-D-muramoyl-L-alanyl-D-glutamate + ADP + phosphate + H(+). The protein operates within cell wall biogenesis; peptidoglycan biosynthesis. Its function is as follows. Cell wall formation. Catalyzes the addition of glutamate to the nucleotide precursor UDP-N-acetylmuramoyl-L-alanine (UMA). The chain is UDP-N-acetylmuramoylalanine--D-glutamate ligase from Protochlamydia amoebophila (strain UWE25).